Consider the following 321-residue polypeptide: PI-PLC X domain-containing protein 3 (321 aa).

The PI-PLC X-box domain maps to 22–197 (SMHSIPLTNL…DYQVLVFYHS (176 aa)). Catalysis depends on residues histidine 37 and histidine 114.

As to expression, expressed at highest levels in heart. Also detected in kidney, lung, small intestine and colon. Expressed at very low levels, if any, in leukocytes, thymus and skeletal muscle.

The protein resides in the cytoplasm. The polypeptide is PI-PLC X domain-containing protein 3 (PLCXD3) (Homo sapiens (Human)).